Consider the following 193-residue polypeptide: Bcl-2-like protein 2 (193 aa).

The residue at position 2 (Ala2) is an N-acetylalanine. The BH4 signature appears at 9-29 (DTRALVADFVGYKLRQKGYVC). Positions 85–104 (ELFQGGPNWGRLVAFFVFGA) match the BH1 motif. Positions 136–151 (DWIHSSGGWAEFTALY) match the BH2 motif.

It belongs to the Bcl-2 family. As to quaternary structure, interacts with HIF3A (via C-terminus domain). Interacts with BOP.

It is found in the mitochondrion membrane. Promotes cell survival. Blocks dexamethasone-induced apoptosis. Mediates survival of postmitotic Sertoli cells by suppressing death-promoting activity of BAX. The chain is Bcl-2-like protein 2 (BCL2L2) from Bos taurus (Bovine).